Consider the following 213-residue polypeptide: StAR-related lipid transfer protein 5 (213 aa).

The START domain occupies 1 to 213 (MDPSWATQES…LQKAVRKFHH (213 aa)).

Expressed in most tissues, with highest levels in liver and in kidney.

Functionally, may be involved in the intracellular transport of sterols or other lipids. May bind cholesterol or other sterols. This Mus musculus (Mouse) protein is StAR-related lipid transfer protein 5 (Stard5).